Reading from the N-terminus, the 392-residue chain is ERBB-3 BINDING PROTEIN 1 (392 aa).

Necessary for nucleolar localization stretches follow at residues 1 to 50 and 298 to 392; these read MSSD…IVDI and HLQP…NAQE. An RNA-binding region spans residues 48 to 56; the sequence is VDICEKGDS. An interaction with RNA region spans residues 355–372; sequence GIKKKKGGGKKKKAQKAG. The Nuclear localization signal motif lies at 357-367; that stretch reads KKKKGGGKKKK. The segment covering 358 to 369 has biased composition (basic residues); sequence KKKGGGKKKKAQ. Positions 358–392 are disordered; the sequence is KKKGGGKKKKAQKAGEKGEASTEAEPMDASSNAQE.

Belongs to the peptidase M24 family. Component of a ribonucleoprotein complex. Interacts with REIL1 and REIL2. In terms of tissue distribution, strongly expressed in calls, roots and flowers, to a lower extent, in stems and siliques, but hardly detectable in leaves.

It localises to the nucleus. Functionally, binds RNA. Associates with 28S, 18S and 5.8S mature rRNAs, several rRNA precursors and probably U3 small nucleolar RNA. May be involved in regulation of intermediate and late steps of rRNA processing. May be involved in ribosome assembly. Required for expression of cell cycle genes such as CYCD3-1, RNR2A and CDKB1-1. Promotes, in a dose- and auxin-dependent manner, organ growth by stimulating both cell proliferation and expansion, via the regulation of RBR1 levels. The chain is ERBB-3 BINDING PROTEIN 1 from Arabidopsis thaliana (Mouse-ear cress).